The primary structure comprises 168 residues: MPRSRINGNFIDKTFSIVANILLRIIPTTSGEKEAFTYYRDGMSAQSEGNYAEALQNYYEAMRLEIDPYDRSYILYNIGLIHTSNGEHTKALEYYFRALERNPFLPQAFNNMAVICHYRGEQAIRQGDSEIAEAWFDQAAEYWKQAIALTPGNYIEAQNWLKITRRFE.

3 TPR repeats span residues 35-68, 72-105, and 120-153; these read AFTY…EIDP, SYIL…NPFL, and GEQA…TPGN.

It belongs to the Ycf3 family.

It localises to the plastid. The protein localises to the chloroplast thylakoid membrane. In terms of biological role, essential for the assembly of the photosystem I (PSI) complex. May act as a chaperone-like factor to guide the assembly of the PSI subunits. The polypeptide is Photosystem I assembly protein Ycf3 (Oenothera elata subsp. hookeri (Hooker's evening primrose)).